The primary structure comprises 356 residues: Testis-expressed protein 19.1 (356 aa).

An interaction with LIRE1 region spans residues 1-78; it reads MCPPVSVRHG…WDAEPMEHLS (78 aa). Acidic residues predominate over residues 59–72; that stretch reads LSEEEEEEEVWDAE. The interval 59–107 is disordered; it reads LSEEEEEEEVWDAEPMEHLSESESLESDSKQDAGSEQDAGSEPNTRSEQ. Basic and acidic residues predominate over residues 73–91; it reads PMEHLSESESLESDSKQDA. An important for interaction with piRNA region spans residues 139–186; sequence QWVVFSISVPTELLPQEAVPLDLGPEDVEWTQALPWRLDVLFPCSHRL.

As to quaternary structure, interacts with UBR2; does not lead to Tex19.1 degradation and stabilizes it. Interacts with piRNA-associated proteins DDX4, EDC4, MAEL, PIWIL1, PIWIL2, RANBP9 and TDRD6. Interacts with L1RE1.

It is found in the cytoplasm. In terms of biological role, required during spermatogenesis and placenta development, participating in the repression of retrotransposable elements and prevent their mobilization. Collaborates with the Piwi-interacting RNA (piRNA) pathway, which mediates the repression of transposable elements during meiosis by forming complexes composed of piRNAs and Piwi proteins. Interacts with Piwi proteins and directly binds piRNAs, a class of 24 to 30 nucleotide RNAs that are generated by a Dicer-independent mechanism and are primarily derived from transposons and other repeated sequence elements. Also during spermatogenesis, promotes, with UBR2, SPO11-dependent recombination foci to accumulate and drive robust homologous chromosome synapsis. Interacts with LINE-1 retrotransposon encoded LIRE1, stimulates LIRE1 polyubiquitination, mediated by UBR2, and degradation, inhibiting LINE-1 retrotransposon mobilization. This is Testis-expressed protein 19.1 (Tex19.1) from Rattus norvegicus (Rat).